A 659-amino-acid polypeptide reads, in one-letter code: ATP-binding cassette sub-family D member 3 (659 aa).

Residues 2 to 61 form an interaction with PEX19 region; the sequence is AAFSKYLTARNSSLAGAAFLLFCLLHKRRRALGLHGKKSGKPPLQNNEKEGKKERAVVDK. An N-linked (GlcNAc...) asparagine glycan is attached at N12. Position 61 is an N6-acetyllysine (K61). A helical transmembrane segment spans residues 84–104; sequence GYLILIAVMLVSRTYCDVWMI. Residues 85–372 enclose the ABC transmembrane type-1 domain; sequence YLILIAVMLV…MLLRMSQALG (288 aa). The N-linked (GlcNAc...) asparagine glycan is linked to N106. Residues 126-146 traverse the membrane as a helical segment; sequence LFNFIAAMPLISLVNNFLKYG. N-linked (GlcNAc...) asparagine glycosylation occurs at N206. A helical membrane pass occupies residues 224 to 244; it reads AIGAQGPASMMAYLLVSGLFL. K260 is subject to N6-acetyllysine. A helical transmembrane segment spans residues 313-333; sequence MGFIDSIIAKYIATVVGYLVV. An N6-acetyllysine modification is found at K399. A Phosphoserine modification is found at S424. The region spanning 434–659 is the ABC transporter domain; that stretch reads INADNIIKFD…ITEDTVEFGS (226 aa). ATP is bound at residue 473–480; sequence GPNGCGKS. Residue K533 is modified to N6-acetyllysine. S659 bears the Phosphoserine mark.

It belongs to the ABC transporter superfamily. ABCD family. Peroxisomal fatty acyl CoA transporter (TC 3.A.1.203) subfamily. In terms of assembly, homodimers. Can form heterodimers with ABCD1 and ABCD2. Dimerization is necessary to form an active transporter. Interacts with PEX19; mediates the targeting of ABCD3 to peroxisomes. Ubiquitinated by PEX2 during pexophagy in response to starvation, leading to its degradation.

It localises to the peroxisome membrane. It catalyses the reaction a very long-chain fatty acyl-CoA + H2O = a very long-chain fatty acid + CoA + H(+). The catalysed reaction is a very long-chain fatty acid(in) + ATP + H2O = a very long-chain fatty acid(out) + ADP + phosphate + H(+). The enzyme catalyses a long-chain fatty acyl-CoA + H2O = a long-chain fatty acid + CoA + H(+). It carries out the reaction a long-chain fatty acid(in) + ATP + H2O = a long-chain fatty acid(out) + ADP + phosphate + H(+). It catalyses the reaction pristanoyl-CoA + H2O = 2,6,10,14-tetramethylpentadecanoate + CoA + H(+). The catalysed reaction is 2,6,10,14-tetramethylpentadecanoate(in) + ATP + H2O = 2,6,10,14-tetramethylpentadecanoate(out) + ADP + phosphate + H(+). The enzyme catalyses hexadecanedioyl-CoA + H2O = hexadecanedioate + CoA + H(+). It carries out the reaction hexadecanedioate(in) + ATP + H2O = hexadecanedioate(out) + ADP + phosphate + H(+). It catalyses the reaction (5Z,8Z,11Z,14Z,17Z)-eicosapentaenoyl-CoA + H2O = (5Z,8Z,11Z,14Z,17Z)-eicosapentaenoate + CoA + H(+). The catalysed reaction is (5Z,8Z,11Z,14Z,17Z)-eicosapentaenoate(in) + ATP + H2O = (5Z,8Z,11Z,14Z,17Z)-eicosapentaenoate(out) + ADP + phosphate + H(+). The enzyme catalyses (4Z,7Z,10Z,13Z,16Z,19Z)-docosahexaenoyl-CoA + H2O = (4Z,7Z,10Z,13Z,16Z,19Z)-docosahexaenoate + CoA + H(+). It carries out the reaction (4Z,7Z,10Z,13Z,16Z,19Z)-docosahexaenoate(in) + ATP + H2O = (4Z,7Z,10Z,13Z,16Z,19Z)-docosahexaenoate(out) + ADP + phosphate + H(+). Its function is as follows. Broad substrate specificity ATP-dependent transporter of the ATP-binding cassette (ABC) family that catalyzes the transport of long-chain fatty acids (LCFA)-CoA, dicarboxylic acids-CoA, long-branched-chain fatty acids-CoA and bile acids from the cytosol to the peroxisome lumen for beta-oxydation. Has fatty acyl-CoA thioesterase and ATPase activities. Probably hydrolyzes fatty acyl-CoAs into free fatty acids prior to their ATP-dependent transport into peroxisomes. Thus, play a role in regulation of LCFAs and energy metabolism namely, in the degradation and biosynthesis of fatty acids by beta-oxidation. In Rattus norvegicus (Rat), this protein is ATP-binding cassette sub-family D member 3 (Abcd3).